The chain runs to 100 residues: Urease subunit gamma (100 aa).

Belongs to the urease gamma subunit family. In terms of assembly, heterotrimer of UreA (gamma), UreB (beta) and UreC (alpha) subunits. Three heterotrimers associate to form the active enzyme.

The protein localises to the cytoplasm. The catalysed reaction is urea + 2 H2O + H(+) = hydrogencarbonate + 2 NH4(+). It functions in the pathway nitrogen metabolism; urea degradation; CO(2) and NH(3) from urea (urease route): step 1/1. This Pseudoalteromonas translucida (strain TAC 125) protein is Urease subunit gamma.